The following is a 1140-amino-acid chain: Squamosa promoter-binding-like protein 15 (1140 aa).

Disordered stretches follow at residues 73 to 112 (RVNA…LNLQ) and 124 to 177 (DVSP…GGNS). 2 stretches are compositionally biased toward low complexity: residues 76 to 100 (AGLS…EALR) and 125 to 135 (VSPAATTVSSS). The span at 164–177 (ASGGGGGGGGGGNS) shows a compositional bias: gly residues. An SBP-type zinc finger spans residues 184 to 261 (YPMCQVDDCR…AGHNRRRRKT (78 aa)). Positions 187, 192, 209, 212, 228, 231, 235, and 247 each coordinate Zn(2+). The Bipartite nuclear localization signal signature appears at 244–260 (KRSCRRRLAGHNRRRRK). Disordered stretches follow at residues 327-382 (NNGN…ADGF), 403-472 (TSNP…TPPY), 496-517 (LSSE…PVTH), and 558-597 (KDSE…DGQD). Residues 345-375 (ASHSQQQDSVQRTTNGFEKQTNGLDKQTNGF) are compositionally biased toward polar residues. Over residues 403–430 (TSNPDSNTSQSQGSSDSSGNNKSKSQST) the composition is skewed to low complexity. Over residues 450–466 (RKNDALERSPEMYKQPD) the composition is skewed to basic and acidic residues. A compositionally biased stretch (polar residues) spans 496–514 (LSSESSNPLDERSPSSSPP). Positions 579–593 (TSTSCSDHSPSTSNS) are enriched in low complexity.

Expressed in stems, leaf sheaths, and young panicles.

It localises to the nucleus. Functionally, trans-acting factor that binds specifically to the consensus nucleotide sequence 5'-TNCGTACAA-3'. This chain is Squamosa promoter-binding-like protein 15 (SPL15), found in Oryza sativa subsp. indica (Rice).